The chain runs to 325 residues: MTATVKDELSRLRVAKPCCRRAEMAAMLRFAGGLHIVGGRIVVEAELDTGATARRLRREIAEVFGFPSSVAVLAAGGLRRSVRYIVRVERDGEQLARSTGLLDQRGRPVRGLPPQVVTGSACDAAAAWRGAFLAHGSLTEPGRSCSMEVTSPGPEAALALVGAARRMGVQAKSRDVRGVDRVVVRDGDAIGALLTKIGAHDSLMAWEERRMRREVRATANRLANFDDANLRRSARAAVAAGARVQAAMRILGDDAPDHLLAAGRLRLEHAQASLEELGALADPPLTKDAVAGRIRRLLALADKRANALGIPNTEASVSPELFENA.

Residues 273-306 (SLEELGALADPPLTKDAVAGRIRRLLALADKRAN) constitute a DNA-binding region (H-T-H motif).

It belongs to the WhiA family.

Functionally, involved in cell division and chromosome segregation. The protein is Probable cell division protein WhiA of Parafrankia sp. (strain EAN1pec).